Here is a 297-residue protein sequence, read N- to C-terminus: 33 kDa chaperonin (297 aa).

2 disulfide bridges follow: Cys-239–Cys-241 and Cys-272–Cys-275.

This sequence belongs to the HSP33 family. In terms of processing, under oxidizing conditions two disulfide bonds are formed involving the reactive cysteines. Under reducing conditions zinc is bound to the reactive cysteines and the protein is inactive.

It is found in the cytoplasm. Redox regulated molecular chaperone. Protects both thermally unfolding and oxidatively damaged proteins from irreversible aggregation. Plays an important role in the bacterial defense system toward oxidative stress. The polypeptide is 33 kDa chaperonin (Clostridium acetobutylicum (strain ATCC 824 / DSM 792 / JCM 1419 / IAM 19013 / LMG 5710 / NBRC 13948 / NRRL B-527 / VKM B-1787 / 2291 / W)).